Here is a 229-residue protein sequence, read N- to C-terminus: DNA mismatch repair protein MutH (229 aa).

This sequence belongs to the MutH family.

The protein resides in the cytoplasm. Its function is as follows. Sequence-specific endonuclease that cleaves unmethylated GATC sequences. It is involved in DNA mismatch repair. This is DNA mismatch repair protein MutH from Shigella flexneri serotype 5b (strain 8401).